The sequence spans 675 residues: Mitochondrial distribution and morphology protein 12 (675 aa).

The region spanning 1-675 (MSIDLNWDTV…VYPSFWTFLV (675 aa)) is the SMP-LTD domain. Disordered stretches follow at residues 66–186 (LPDF…GTNH), 241–270 (GPSW…GAGG), 307–327 (GTGK…PLGT), 365–390 (TGPR…VAPA), and 444–517 (PKQG…RFRE). Positions 78–101 (SSEESDSEEEVAYENEGEYLDDPV) are enriched in acidic residues. Residues 123–137 (NSSTGSRNGSGPNSG) are compositionally biased toward low complexity. Positions 261-270 (GGAGGGGAGG) are enriched in gly residues. The segment covering 317–327 (PLTGTSTPLGT) has biased composition (low complexity). 2 stretches are compositionally biased toward polar residues: residues 373 to 382 (PSSQSLNSVG) and 454 to 469 (VSTL…NNRA). Residues 497-510 (EPEEDEEEEEEGEE) show a composition bias toward acidic residues.

Belongs to the MDM12 family. As to quaternary structure, component of the ER-mitochondria encounter structure (ERMES) or MDM complex, composed of mmm-1, mdm10, mdm12 and mdm34. A mmm-1 homodimer associates with one molecule of mdm12 on each side in a pairwise head-to-tail manner, and the SMP-LTD domains of mmm-1 and mdm12 generate a continuous hydrophobic tunnel for phospholipid trafficking.

Its subcellular location is the mitochondrion outer membrane. It localises to the endoplasmic reticulum membrane. Its function is as follows. Component of the ERMES/MDM complex, which serves as a molecular tether to connect the endoplasmic reticulum (ER) and mitochondria. Components of this complex are involved in the control of mitochondrial shape and protein biogenesis, and function in nonvesicular lipid trafficking between the ER and mitochondria. Mdm12 is required for the interaction of the ER-resident membrane protein MMM1 and the outer mitochondrial membrane-resident beta-barrel protein mdm10. The mdm12-mmm-1 subcomplex functions in the major beta-barrel assembly pathway that is responsible for biogenesis of all mitochondrial outer membrane beta-barrel proteins, and acts in a late step after the SAM complex. The mdm10-mdm12-mmm-1 subcomplex further acts in the TOM40-specific pathway after the action of the mdm12-mmm1 complex. Essential for establishing and maintaining the structure of mitochondria and maintenance of mtDNA nucleoids. The protein is Mitochondrial distribution and morphology protein 12 of Neurospora crassa (strain ATCC 24698 / 74-OR23-1A / CBS 708.71 / DSM 1257 / FGSC 987).